Consider the following 214-residue polypeptide: MADS-box protein CMB2 (214 aa).

In terms of domain architecture, MADS-box spans 3–58 (RGKLEIRKIENKTNRQVTFSKRRNGIMKKAQELTVLCDAKVSLLMISSTHKLHHYL). Positions 84–174 (WERMQEQHRK…VMELEAKFRG (91 aa)) constitute a K-box domain.

In flowers. Not found in vegetative tissues.

It localises to the nucleus. The sequence is that of MADS-box protein CMB2 (CMB2) from Dianthus caryophyllus (Carnation).